Consider the following 473-residue polypeptide: Anthocyanidin 5,3-O-glucosyltransferase (473 aa).

This sequence belongs to the UDP-glycosyltransferase family.

It participates in pigment biosynthesis; anthocyanin biosynthesis. Functionally, sequentially catalyzes two glycosylation steps at the 5-OH and 3-OH positions of anthocyanidin. Unglycosylated anthocyanidin or anthocyanidin 5-O-glucoside, but not anthocyanidin 3-O-glucoside, can be used as glucosyl acceptor. This Rosa hybrid cultivar protein is Anthocyanidin 5,3-O-glucosyltransferase (RhGT1).